Here is a 201-residue protein sequence, read N- to C-terminus: uncharacterized protein (201 aa).

Residues 64–78 are compositionally biased toward acidic residues; the sequence is DNEIKEEEESEEEEK. Disordered regions lie at residues 64–114 and 182–201; these read DNEI…FKNA and ILPGGCTGNTETVDQGLSKQ. Basic residues predominate over residues 96–106; sequence RNKHGRNRNPR. Residues 189–201 show a composition bias toward polar residues; sequence GNTETVDQGLSKQ.

This is an uncharacterized protein from Ostreid herpesvirus 1 (isolate France) (OsHV-1).